A 140-amino-acid polypeptide reads, in one-letter code: Lymphocyte antigen 6H (140 aa).

Residues 1–25 (MLPAAMKGLGLALLAVLLCSAPAHG) form the signal peptide. The 66-residue stretch at 26–91 (LWCQDCTLTT…RHFFSDYLMG (66 aa)) folds into the UPAR/Ly6 domain. 4 disulfide bridges follow: Cys-28–Cys-52, Cys-31–Cys-40, Cys-45–Cys-73, and Cys-77–Cys-104. N-linked (GlcNAc...) asparagine glycosylation occurs at Asn-36. Gly-115 is lipidated: GPI-anchor amidated glycine. Positions 116–140 (AGHSPWALAGGLLLSLGPALLWAGP) are cleaved as a propeptide — removed in mature form.

In terms of assembly, interacts with CHRNA4 and CHRNA7.

It localises to the cell membrane. Functionally, believed to act as a modulator of nicotinic acetylcholine receptors (nAChRs) activity. In vitro inhibits alpha-3:beta-4-containing nAChRs maximum response. May play a role in the intracellular trafficking of alpha-7-containing nAChRs and may inhibit their expression at the cell surface. Seems to inhibit alpha-7/CHRNA7 signaling in hippocampal neurons. This chain is Lymphocyte antigen 6H (LY6H), found in Macaca fascicularis (Crab-eating macaque).